The primary structure comprises 152 residues: UPF0266 membrane protein CKO_01158 (152 aa).

3 helical membrane passes run 6 to 26, 45 to 65, and 67 to 87; these read LVLV…QFIM, VDSV…VTSH, and AQIT…IFWV.

This sequence belongs to the UPF0266 family.

It is found in the cell inner membrane. The polypeptide is UPF0266 membrane protein CKO_01158 (Citrobacter koseri (strain ATCC BAA-895 / CDC 4225-83 / SGSC4696)).